Consider the following 236-residue polypeptide: uncharacterized protein (236 aa).

This sequence to E.coli YfjP and YkfA.

This is an uncharacterized protein from Escherichia coli (strain K12).